We begin with the raw amino-acid sequence, 334 residues long: Protein-methionine-sulfoxide reductase catalytic subunit MsrP (334 aa).

A signal peptide (tat-type signal) is located at residues 1–44; it reads MKKNQFLKESDVTAESVFFMKRRQVLKALGISAAAFSLPHAAHA. Mo-molybdopterin contacts are provided by residues Asn-88, 91-92, Cys-146, Thr-181, Asn-233, Arg-238, and 249-251; these read YE and GIK.

This sequence belongs to the MsrP family. In terms of assembly, heterodimer of a catalytic subunit (MsrP) and a heme-binding subunit (MsrQ). It depends on Mo-molybdopterin as a cofactor. In terms of processing, predicted to be exported by the Tat system. The position of the signal peptide cleavage has not been experimentally proven.

Its subcellular location is the periplasm. It catalyses the reaction L-methionyl-[protein] + a quinone + H2O = L-methionyl-(S)-S-oxide-[protein] + a quinol. The enzyme catalyses L-methionyl-[protein] + a quinone + H2O = L-methionyl-(R)-S-oxide-[protein] + a quinol. In terms of biological role, part of the MsrPQ system that repairs oxidized periplasmic proteins containing methionine sulfoxide residues (Met-O), using respiratory chain electrons. Thus protects these proteins from oxidative-stress damage caused by reactive species of oxygen and chlorine generated by the host defense mechanisms. MsrPQ is essential for the maintenance of envelope integrity under bleach stress, rescuing a wide series of structurally unrelated periplasmic proteins from methionine oxidation, including the primary periplasmic chaperone SurA and the lipoprotein Pal. The catalytic subunit MsrP is non-stereospecific, being able to reduce both (R-) and (S-) diastereoisomers of methionine sulfoxide. This is Protein-methionine-sulfoxide reductase catalytic subunit MsrP from Escherichia coli O7:K1 (strain IAI39 / ExPEC).